We begin with the raw amino-acid sequence, 448 residues long: Asparagine--tRNA ligase (448 aa).

The protein belongs to the class-II aminoacyl-tRNA synthetase family. In terms of assembly, homodimer.

Its subcellular location is the cytoplasm. It catalyses the reaction tRNA(Asn) + L-asparagine + ATP = L-asparaginyl-tRNA(Asn) + AMP + diphosphate + H(+). In Streptococcus agalactiae serotype Ia (strain ATCC 27591 / A909 / CDC SS700), this protein is Asparagine--tRNA ligase.